A 60-amino-acid polypeptide reads, in one-letter code: Metallothionein B (60 aa).

The tract at residues 1-28 (MDPCECSKTGSCNCGGSCKCSNCACTSC) is beta. Cys4, Cys6, Cys12, Cys14, Cys18, Cys20, Cys23, Cys25, Cys28, Cys32, Cys33, Cys35, Cys36, Cys40, Cys43, Cys47, Cys49, Cys54, Cys58, and Cys59 together coordinate a divalent metal cation. Residues 29–60 (KKSCCPCCPSDCSKCASGCVCKGKTCDTSCCQ) form an alpha region.

Belongs to the metallothionein superfamily. Type 1 family.

In terms of biological role, metallothioneins have a high content of cysteine residues that bind various heavy metals. In Oncorhynchus mykiss (Rainbow trout), this protein is Metallothionein B (mtb).